A 386-amino-acid polypeptide reads, in one-letter code: Succinate--CoA ligase [ADP-forming] subunit beta (386 aa).

Positions 9-244 constitute an ATP-grasp domain; the sequence is KALLRAAGIK…TTQEDHRETQ (236 aa). ATP-binding positions include Lys46, 53 to 55, Glu100, and Arg103; that span reads GRG. Residues Asn199 and Asp213 each contribute to the Mg(2+) site. Residues Asn264 and 321-323 each bind substrate; that span reads GIV.

Belongs to the succinate/malate CoA ligase beta subunit family. Heterotetramer of two alpha and two beta subunits. Mg(2+) is required as a cofactor.

It carries out the reaction succinate + ATP + CoA = succinyl-CoA + ADP + phosphate. It catalyses the reaction GTP + succinate + CoA = succinyl-CoA + GDP + phosphate. It functions in the pathway carbohydrate metabolism; tricarboxylic acid cycle; succinate from succinyl-CoA (ligase route): step 1/1. In terms of biological role, succinyl-CoA synthetase functions in the citric acid cycle (TCA), coupling the hydrolysis of succinyl-CoA to the synthesis of either ATP or GTP and thus represents the only step of substrate-level phosphorylation in the TCA. The beta subunit provides nucleotide specificity of the enzyme and binds the substrate succinate, while the binding sites for coenzyme A and phosphate are found in the alpha subunit. This is Succinate--CoA ligase [ADP-forming] subunit beta from Dichelobacter nodosus (strain VCS1703A).